The sequence spans 179 residues: MSRIGKQPVPVPTGVDVMIEGQKVSVKGPKGALDLTVAEPITVSRNDDGAIVISRPNDERRNRSLHGLSRTLVSNLVTGVTEGYTTKMEIHGVGYRVQLKGANLEFALGYSHPVVIEAPEGITFAVQAPTKFTVSGIDKQKVGQISANIRRLRRPDPYKGKGVRYEGEQIRRKVGKTGK.

The protein belongs to the universal ribosomal protein uL6 family. In terms of assembly, part of the 50S ribosomal subunit.

In terms of biological role, this protein binds to the 23S rRNA, and is important in its secondary structure. It is located near the subunit interface in the base of the L7/L12 stalk, and near the tRNA binding site of the peptidyltransferase center. The chain is Large ribosomal subunit protein uL6 from Mycobacterium ulcerans (strain Agy99).